The chain runs to 489 residues: Adenosylhomocysteinase (489 aa).

Substrate contacts are provided by Thr-68, Asp-151, and Glu-213. 214 to 216 (TTT) lines the NAD(+) pocket. The substrate site is built by Lys-243 and Asp-247. NAD(+) contacts are provided by residues Asn-248, 277–282 (GYGDVG), Glu-300, Asn-335, 356–358 (IGH), and Asn-403.

It belongs to the adenosylhomocysteinase family. NAD(+) is required as a cofactor.

The protein resides in the cytoplasm. It carries out the reaction S-adenosyl-L-homocysteine + H2O = L-homocysteine + adenosine. The protein operates within amino-acid biosynthesis; L-homocysteine biosynthesis; L-homocysteine from S-adenosyl-L-homocysteine: step 1/1. Functionally, may play a key role in the regulation of the intracellular concentration of adenosylhomocysteine. This chain is Adenosylhomocysteinase, found in Mycobacterium sp. (strain KMS).